The following is a 132-amino-acid chain: C-X-C motif chemokine 5 (132 aa).

An N-terminal signal peptide occupies residues methionine 1–alanine 40. 2 cysteine pairs are disulfide-bonded: cysteine 53–cysteine 79 and cysteine 55–cysteine 95.

This sequence belongs to the intercrine alpha (chemokine CxC) family. Monomer. Homodimer. Post-translationally, GCP-2(1-78) and GCP-2(9-78) are produced by proteolytic cleavage after secretion from fibroblasts and epithelial cells. GCP-2(9-78) is the most prominent form. A number of additional N-terminal (processed between pos. 41 and 48) and C-terminal (processed between pos. 118 and 132) processed forms have been identified, probably also representing intermediate states.

It is found in the secreted. Its function is as follows. May participate in the recruitment of inflammatory cells by injured or infected tissue. GCP-2(1-78) and, more potent, GCP-2(9-78) attract neutrophils and are involved in neutrophil activation. The polypeptide is C-X-C motif chemokine 5 (Cxcl5) (Mus musculus (Mouse)).